The chain runs to 481 residues: Proline--tRNA ligase (481 aa).

It belongs to the class-II aminoacyl-tRNA synthetase family. ProS type 3 subfamily. As to quaternary structure, homodimer.

The protein resides in the cytoplasm. The catalysed reaction is tRNA(Pro) + L-proline + ATP = L-prolyl-tRNA(Pro) + AMP + diphosphate. Its function is as follows. Catalyzes the attachment of proline to tRNA(Pro) in a two-step reaction: proline is first activated by ATP to form Pro-AMP and then transferred to the acceptor end of tRNA(Pro). The sequence is that of Proline--tRNA ligase from Chlorobium limicola (strain DSM 245 / NBRC 103803 / 6330).